A 249-amino-acid polypeptide reads, in one-letter code: tRNA (guanine-N(1)-)-methyltransferase (249 aa).

S-adenosyl-L-methionine is bound by residues G113 and 133-138 (VGDYVL).

The protein belongs to the RNA methyltransferase TrmD family. Homodimer.

The protein localises to the cytoplasm. It catalyses the reaction guanosine(37) in tRNA + S-adenosyl-L-methionine = N(1)-methylguanosine(37) in tRNA + S-adenosyl-L-homocysteine + H(+). Specifically methylates guanosine-37 in various tRNAs. The chain is tRNA (guanine-N(1)-)-methyltransferase from Tolumonas auensis (strain DSM 9187 / NBRC 110442 / TA 4).